A 118-amino-acid chain; its full sequence is Ribonuclease P protein component (118 aa).

The protein belongs to the RnpA family. In terms of assembly, consists of a catalytic RNA component (M1 or rnpB) and a protein subunit.

It carries out the reaction Endonucleolytic cleavage of RNA, removing 5'-extranucleotides from tRNA precursor.. Its function is as follows. RNaseP catalyzes the removal of the 5'-leader sequence from pre-tRNA to produce the mature 5'-terminus. It can also cleave other RNA substrates such as 4.5S RNA. The protein component plays an auxiliary but essential role in vivo by binding to the 5'-leader sequence and broadening the substrate specificity of the ribozyme. In Shewanella baltica (strain OS155 / ATCC BAA-1091), this protein is Ribonuclease P protein component.